A 434-amino-acid polypeptide reads, in one-letter code: Serine--tRNA ligase (434 aa).

237–239 (TAE) contributes to the L-serine binding site. 268 to 270 (RAE) lines the ATP pocket. Glu-291 is an L-serine binding site. 358 to 361 (EISS) contributes to the ATP binding site. Residue Ser-393 coordinates L-serine.

The protein belongs to the class-II aminoacyl-tRNA synthetase family. Type-1 seryl-tRNA synthetase subfamily. In terms of assembly, homodimer. The tRNA molecule binds across the dimer.

The protein localises to the cytoplasm. The enzyme catalyses tRNA(Ser) + L-serine + ATP = L-seryl-tRNA(Ser) + AMP + diphosphate + H(+). It catalyses the reaction tRNA(Sec) + L-serine + ATP = L-seryl-tRNA(Sec) + AMP + diphosphate + H(+). It participates in aminoacyl-tRNA biosynthesis; selenocysteinyl-tRNA(Sec) biosynthesis; L-seryl-tRNA(Sec) from L-serine and tRNA(Sec): step 1/1. In terms of biological role, catalyzes the attachment of serine to tRNA(Ser). Is also able to aminoacylate tRNA(Sec) with serine, to form the misacylated tRNA L-seryl-tRNA(Sec), which will be further converted into selenocysteinyl-tRNA(Sec). This chain is Serine--tRNA ligase, found in Rhodopseudomonas palustris (strain BisB5).